Consider the following 275-residue polypeptide: Mitochondrial prohibitin complex protein 1 (275 aa).

Residues 180–213 (REFTEAVEMKQVAQQEAEKARYLVEKAEQMKIAA) are a coiled coil.

This sequence belongs to the prohibitin family. High molecular weight complex that consist of phb-1 and phb-2.

The protein localises to the mitochondrion inner membrane. Functionally, PHB proteins are essential during embryonic development and are required for somatic and germline differentiation in the larval gonad. A deficiency in PHB proteins results in altered mitochondrial biogenesis in body wall muscle cells. The chain is Mitochondrial prohibitin complex protein 1 (phb-1) from Caenorhabditis elegans.